The primary structure comprises 294 residues: Shikimate dehydrogenase (NADP(+)) (294 aa).

Residues 23-25 (SRS) and threonine 70 contribute to the shikimate site. Residue lysine 74 is the Proton acceptor of the active site. Shikimate-binding residues include asparagine 95 and aspartate 110. NADP(+) is bound by residues 135-139 (GAGGA), 159-164 (NRTASR), and methionine 232. Tyrosine 234 lines the shikimate pocket. Glycine 255 is a binding site for NADP(+).

The protein belongs to the shikimate dehydrogenase family. In terms of assembly, homodimer.

The enzyme catalyses shikimate + NADP(+) = 3-dehydroshikimate + NADPH + H(+). It functions in the pathway metabolic intermediate biosynthesis; chorismate biosynthesis; chorismate from D-erythrose 4-phosphate and phosphoenolpyruvate: step 4/7. Its function is as follows. Involved in the biosynthesis of the chorismate, which leads to the biosynthesis of aromatic amino acids. Catalyzes the reversible NADPH linked reduction of 3-dehydroshikimate (DHSA) to yield shikimate (SA). This Cupriavidus pinatubonensis (strain JMP 134 / LMG 1197) (Cupriavidus necator (strain JMP 134)) protein is Shikimate dehydrogenase (NADP(+)).